The sequence spans 137 residues: Large ribosomal subunit protein uL16 (137 aa).

Belongs to the universal ribosomal protein uL16 family. In terms of assembly, part of the 50S ribosomal subunit.

Its function is as follows. Binds 23S rRNA and is also seen to make contacts with the A and possibly P site tRNAs. The protein is Large ribosomal subunit protein uL16 of Leuconostoc mesenteroides subsp. mesenteroides (strain ATCC 8293 / DSM 20343 / BCRC 11652 / CCM 1803 / JCM 6124 / NCDO 523 / NBRC 100496 / NCIMB 8023 / NCTC 12954 / NRRL B-1118 / 37Y).